The sequence spans 2234 residues: RNA-directed RNA polymerase L (2234 aa).

The endonuclease stretch occupies residues 26–283 (ITVVTSQTEM…INLSDEKLSC (258 aa)). Glu51, Asp89, and Glu102 together coordinate Mn(2+). The active site involves Lys115. Basic and acidic residues predominate over residues 879–891 (KRDDHMKDSEDSK). 2 disordered regions span residues 879-898 (KRDD…SSDL) and 927-949 (KLKE…QQKR). Over residues 935 to 945 (RQSSSGSSLKN) the composition is skewed to polar residues. Residues 1184-1383 (MEMKMSVNLG…FISSKFNKFV (200 aa)) enclose the RdRp catalytic domain. Asp1342 provides a ligand contact to Mg(2+).

It belongs to the Bunyavirales RNA polymerase family. As to quaternary structure, homomultimer; the oligomeric structure is essential for the polymerase activity. Interacts with nucleoprotein N. Interacts with protein Z; this interaction inhibits viral transcription and replication, Z partially blocks the product exit tunnel for the releasing nascent RNA product. Mn(2+) is required as a cofactor. The cofactor is Mg(2+).

Its subcellular location is the virion. It is found in the host cytoplasm. It catalyses the reaction RNA(n) + a ribonucleoside 5'-triphosphate = RNA(n+1) + diphosphate. Its function is as follows. RNA-dependent RNA polymerase, which is responsible for the replication and transcription of the viral RNA genome using antigenomic RNA as an intermediate. During transcription, synthesizes subgenomic RNAs and assures their capping by a cap-snatching mechanism, which involves the endonuclease activity cleaving the host capped pre-mRNAs. These short capped RNAs are then used as primers for viral transcription. The 3'-end of subgenomic mRNAs molecules are heterogeneous and not polyadenylated. The replicase function is to direct synthesis of antigenomic and genomic RNA which are encapsidated and non capped. As a consequence of the use of the same enzyme for both transcription and replication, these mechanisms need to be well coordinated. These processes may be regulated by proteins N and Z in a dose-dependent manner. Z protein inhibits the viral polymerase L und thus the viral transcription and RNA synthesis. The protein is RNA-directed RNA polymerase L of Bolomys (OLVV).